The chain runs to 62 residues: Omega-lycotoxin-Am1e (62 aa).

Positions 1 to 15 are excised as a propeptide; that stretch reads EDEVEETLPVAEEGR. Intrachain disulfides connect C19/C34, C26/C39, C33/C59, and C41/C57.

Belongs to the neurotoxin omega-lctx family. In terms of tissue distribution, expressed by the venom gland.

It is found in the secreted. Its function is as follows. Modulates Cav2.1/CACNA1A voltage-gated calcium channels (P/Q-type currents) in rat cerebellar Purkinje cells and hippocampal CA1-CA3 neurons. At saturating concentrations (&gt;10 nM) decelerates activation kinetics and slightly increases peak amplitude without affecting deactivation kinetics. In vivo, does not cause death when intravenously injected into mice. In rat models, through its activity on Cav2.1/CACNA1A, has an ameliorative effect on memory defects provoked by hyperstimulation of N-methyl-D-aspartate receptors (NMDARs) in the hippocampus. The protein is Omega-lycotoxin-Am1e of Alopecosa marikovskyi (Wolf spider).